A 243-amino-acid chain; its full sequence is tRNA1(Val) (adenine(37)-N6)-methyltransferase (243 aa).

This sequence belongs to the methyltransferase superfamily. tRNA (adenine-N(6)-)-methyltransferase family.

It localises to the cytoplasm. It carries out the reaction adenosine(37) in tRNA1(Val) + S-adenosyl-L-methionine = N(6)-methyladenosine(37) in tRNA1(Val) + S-adenosyl-L-homocysteine + H(+). In terms of biological role, specifically methylates the adenine in position 37 of tRNA(1)(Val) (anticodon cmo5UAC). The protein is tRNA1(Val) (adenine(37)-N6)-methyltransferase of Shewanella woodyi (strain ATCC 51908 / MS32).